The primary structure comprises 185 residues: uncharacterized protein (185 aa).

This is an uncharacterized protein from Trypanosoma brucei brucei.